Reading from the N-terminus, the 192-residue chain is dTTP/UTP pyrophosphatase (192 aa).

The active-site Proton acceptor is the D71.

It belongs to the Maf family. YhdE subfamily. A divalent metal cation is required as a cofactor.

It localises to the cytoplasm. It catalyses the reaction dTTP + H2O = dTMP + diphosphate + H(+). The catalysed reaction is UTP + H2O = UMP + diphosphate + H(+). In terms of biological role, nucleoside triphosphate pyrophosphatase that hydrolyzes dTTP and UTP. May have a dual role in cell division arrest and in preventing the incorporation of modified nucleotides into cellular nucleic acids. This Clostridium tetani (strain Massachusetts / E88) protein is dTTP/UTP pyrophosphatase.